A 78-amino-acid polypeptide reads, in one-letter code: Large ribosomal subunit protein bL28 (78 aa).

The protein belongs to the bacterial ribosomal protein bL28 family.

This Synechococcus sp. (strain CC9311) protein is Large ribosomal subunit protein bL28.